Reading from the N-terminus, the 338-residue chain is Ketol-acid reductoisomerase (NADP(+)) (338 aa).

In terms of domain architecture, KARI N-terminal Rossmann spans 1–181; that stretch reads MKVYYDSDAD…GGGRAGIIET (181 aa). NADP(+) contacts are provided by residues 24–27, R47, S50, S52, and 82–85; these read YGSQ and DEHQ. H107 is a catalytic residue. Residue G133 coordinates NADP(+). Residues 182–327 form the KARI C-terminal knotted domain; sequence SFKEETETDL…AKLRAMMPWI (146 aa). Residues D190, E194, E226, and E230 each coordinate Mg(2+). Residue S251 participates in substrate binding.

It belongs to the ketol-acid reductoisomerase family. Mg(2+) is required as a cofactor.

It catalyses the reaction (2R)-2,3-dihydroxy-3-methylbutanoate + NADP(+) = (2S)-2-acetolactate + NADPH + H(+). The enzyme catalyses (2R,3R)-2,3-dihydroxy-3-methylpentanoate + NADP(+) = (S)-2-ethyl-2-hydroxy-3-oxobutanoate + NADPH + H(+). It participates in amino-acid biosynthesis; L-isoleucine biosynthesis; L-isoleucine from 2-oxobutanoate: step 2/4. The protein operates within amino-acid biosynthesis; L-valine biosynthesis; L-valine from pyruvate: step 2/4. In terms of biological role, involved in the biosynthesis of branched-chain amino acids (BCAA). Catalyzes an alkyl-migration followed by a ketol-acid reduction of (S)-2-acetolactate (S2AL) to yield (R)-2,3-dihydroxy-isovalerate. In the isomerase reaction, S2AL is rearranged via a Mg-dependent methyl migration to produce 3-hydroxy-3-methyl-2-ketobutyrate (HMKB). In the reductase reaction, this 2-ketoacid undergoes a metal-dependent reduction by NADPH to yield (R)-2,3-dihydroxy-isovalerate. The polypeptide is Ketol-acid reductoisomerase (NADP(+)) (Magnetococcus marinus (strain ATCC BAA-1437 / JCM 17883 / MC-1)).